A 478-amino-acid chain; its full sequence is UDP-N-acetylmuramate--L-alanine ligase (478 aa).

Residue 126-132 coordinates ATP; the sequence is GTHGKTT.

The protein belongs to the MurCDEF family.

Its subcellular location is the cytoplasm. The enzyme catalyses UDP-N-acetyl-alpha-D-muramate + L-alanine + ATP = UDP-N-acetyl-alpha-D-muramoyl-L-alanine + ADP + phosphate + H(+). It functions in the pathway cell wall biogenesis; peptidoglycan biosynthesis. In terms of biological role, cell wall formation. The chain is UDP-N-acetylmuramate--L-alanine ligase from Mycolicibacterium vanbaalenii (strain DSM 7251 / JCM 13017 / BCRC 16820 / KCTC 9966 / NRRL B-24157 / PYR-1) (Mycobacterium vanbaalenii).